The primary structure comprises 232 residues: Rho-related GTP-binding protein Rho6 (232 aa).

Residues Gln-23–Ala-28, Tyr-38–Thr-45, Asp-67–Ser-71, Cys-125–Asp-128, and Ala-169–Phe-170 contribute to the GTP site. An Effector region motif is present at residues Tyr-42–Tyr-50. Cys-229 carries the cysteine methyl ester modification. Cys-229 is lipidated: S-geranylgeranyl cysteine. Residues Ser-230–Met-232 constitute a propeptide, removed in mature form.

This sequence belongs to the small GTPase superfamily. Rho family. As to quaternary structure, binds GRB7 and PLXNB1. Interacts with PLXNA2. Interacts with UBXD5.

The protein resides in the cell membrane. The protein localises to the cytoplasm. Its subcellular location is the cytoskeleton. Functionally, lacks intrinsic GTPase activity. Has a low affinity for GDP, and constitutively binds GTP. Controls rearrangements of the actin cytoskeleton. Induces the Rac-dependent neuritic process formation in part by disruption of the cortical actin filaments. Causes the formation of many neuritic processes from the cell body with disruption of the cortical actin filaments. In Bos taurus (Bovine), this protein is Rho-related GTP-binding protein Rho6 (RND1).